The primary structure comprises 503 residues: Na(+)-translocating NADH-quinone reductase subunit B (503 aa).

Helical transmembrane passes span M55 to I75, I120 to A140, T161 to V181, and F186 to F206. The residue at position 248 (T248) is an FMN phosphoryl threonine. The next 5 helical transmembrane spans lie at T361–W381, F387–G407, F417–M437, W452–Y472, and G475–V495.

The protein belongs to the NqrB/RnfD family. In terms of assembly, composed of six subunits; NqrA, NqrB, NqrC, NqrD, NqrE and NqrF. FMN is required as a cofactor.

It is found in the cell inner membrane. The catalysed reaction is a ubiquinone + n Na(+)(in) + NADH + H(+) = a ubiquinol + n Na(+)(out) + NAD(+). Its function is as follows. NQR complex catalyzes the reduction of ubiquinone-1 to ubiquinol by two successive reactions, coupled with the transport of Na(+) ions from the cytoplasm to the periplasm. NqrA to NqrE are probably involved in the second step, the conversion of ubisemiquinone to ubiquinol. The protein is Na(+)-translocating NADH-quinone reductase subunit B of Chlamydia abortus (strain DSM 27085 / S26/3) (Chlamydophila abortus).